The chain runs to 278 residues: Tryptophan synthase alpha chain (278 aa).

Residues Glu-49 and Asp-60 each act as proton acceptor in the active site.

This sequence belongs to the TrpA family. As to quaternary structure, tetramer of two alpha and two beta chains.

The catalysed reaction is (1S,2R)-1-C-(indol-3-yl)glycerol 3-phosphate + L-serine = D-glyceraldehyde 3-phosphate + L-tryptophan + H2O. Its pathway is amino-acid biosynthesis; L-tryptophan biosynthesis; L-tryptophan from chorismate: step 5/5. The alpha subunit is responsible for the aldol cleavage of indoleglycerol phosphate to indole and glyceraldehyde 3-phosphate. The polypeptide is Tryptophan synthase alpha chain (Psychrobacter arcticus (strain DSM 17307 / VKM B-2377 / 273-4)).